Here is a 306-residue protein sequence, read N- to C-terminus: Acetyl-coenzyme A carboxylase carboxyl transferase subunit beta (306 aa).

Residues 25–294 (VWTKCDSCGQ…PQDPLPHEPR (270 aa)) enclose the CoA carboxyltransferase N-terminal domain. 4 residues coordinate Zn(2+): C29, C32, C48, and C51. A C4-type zinc finger spans residues 29–51 (CDSCGQVLYRAELERNLEVCPKC). The tract at residues 281–306 (NRPQPQDPLPHEPRPDAVPEDHQDEV) is disordered. A compositionally biased stretch (basic and acidic residues) spans 289-306 (LPHEPRPDAVPEDHQDEV).

It belongs to the AccD/PCCB family. As to quaternary structure, acetyl-CoA carboxylase is a heterohexamer composed of biotin carboxyl carrier protein (AccB), biotin carboxylase (AccC) and two subunits each of ACCase subunit alpha (AccA) and ACCase subunit beta (AccD). Zn(2+) is required as a cofactor.

The protein localises to the cytoplasm. It carries out the reaction N(6)-carboxybiotinyl-L-lysyl-[protein] + acetyl-CoA = N(6)-biotinyl-L-lysyl-[protein] + malonyl-CoA. Its pathway is lipid metabolism; malonyl-CoA biosynthesis; malonyl-CoA from acetyl-CoA: step 1/1. In terms of biological role, component of the acetyl coenzyme A carboxylase (ACC) complex. Biotin carboxylase (BC) catalyzes the carboxylation of biotin on its carrier protein (BCCP) and then the CO(2) group is transferred by the transcarboxylase to acetyl-CoA to form malonyl-CoA. This is Acetyl-coenzyme A carboxylase carboxyl transferase subunit beta from Sodalis glossinidius (strain morsitans).